The sequence spans 266 residues: Carboxy-S-adenosyl-L-methionine synthase (266 aa).

The segment at 1 to 24 (MPKRETQSLHDTQQQPGPTAPQRD) is disordered. Residues Tyr-58, 83–85 (GCS), 108–109 (DN), 136–137 (DI), Asn-151, and Arg-218 each bind S-adenosyl-L-methionine.

It belongs to the class I-like SAM-binding methyltransferase superfamily. Cx-SAM synthase family. In terms of assembly, homodimer.

The enzyme catalyses prephenate + S-adenosyl-L-methionine = carboxy-S-adenosyl-L-methionine + 3-phenylpyruvate + H2O. In terms of biological role, catalyzes the conversion of S-adenosyl-L-methionine (SAM) to carboxy-S-adenosyl-L-methionine (Cx-SAM). This is Carboxy-S-adenosyl-L-methionine synthase from Yersinia enterocolitica serotype O:8 / biotype 1B (strain NCTC 13174 / 8081).